A 275-amino-acid polypeptide reads, in one-letter code: Large ribosomal subunit protein uL2 (275 aa).

Disordered stretches follow at residues 35–55 (EKQTRSSGRNNQGRVTTRHKG) and 223–260 (VAMNPVDHPHGGGEGRTSGGRHPVSPWGIPTKGYKTRN). Positions 39-49 (RSSGRNNQGRV) are enriched in polar residues.

The protein belongs to the universal ribosomal protein uL2 family. In terms of assembly, part of the 50S ribosomal subunit. Forms a bridge to the 30S subunit in the 70S ribosome.

Functionally, one of the primary rRNA binding proteins. Required for association of the 30S and 50S subunits to form the 70S ribosome, for tRNA binding and peptide bond formation. It has been suggested to have peptidyltransferase activity; this is somewhat controversial. Makes several contacts with the 16S rRNA in the 70S ribosome. This is Large ribosomal subunit protein uL2 from Methylococcus capsulatus (strain ATCC 33009 / NCIMB 11132 / Bath).